A 506-amino-acid polypeptide reads, in one-letter code: Histidine ammonia-lyase (506 aa).

Residues 144-146 (ASG) constitute a cross-link (5-imidazolinone (Ala-Gly)). The residue at position 145 (Ser145) is a 2,3-didehydroalanine (Ser).

The protein belongs to the PAL/histidase family. In terms of processing, contains an active site 4-methylidene-imidazol-5-one (MIO), which is formed autocatalytically by cyclization and dehydration of residues Ala-Ser-Gly.

It localises to the cytoplasm. It carries out the reaction L-histidine = trans-urocanate + NH4(+). The protein operates within amino-acid degradation; L-histidine degradation into L-glutamate; N-formimidoyl-L-glutamate from L-histidine: step 1/3. The protein is Histidine ammonia-lyase of Legionella pneumophila (strain Paris).